A 380-amino-acid chain; its full sequence is Queuine tRNA-ribosyltransferase (380 aa).

The Proton acceptor role is filled by aspartate 95. Substrate is bound by residues 95-99 (DSGGF), aspartate 149, glutamine 192, and glycine 219. Residues 250-256 (GVGSPDA) are RNA binding. Residue aspartate 269 is the Nucleophile of the active site. The tract at residues 274-278 (TRIAR) is RNA binding; important for wobble base 34 recognition. Residues cysteine 307, cysteine 309, cysteine 312, and histidine 338 each coordinate Zn(2+).

This sequence belongs to the queuine tRNA-ribosyltransferase family. Homodimer. Within each dimer, one monomer is responsible for RNA recognition and catalysis, while the other monomer binds to the replacement base PreQ1. The cofactor is Zn(2+).

The catalysed reaction is 7-aminomethyl-7-carbaguanine + guanosine(34) in tRNA = 7-aminomethyl-7-carbaguanosine(34) in tRNA + guanine. Its pathway is tRNA modification; tRNA-queuosine biosynthesis. Functionally, catalyzes the base-exchange of a guanine (G) residue with the queuine precursor 7-aminomethyl-7-deazaguanine (PreQ1) at position 34 (anticodon wobble position) in tRNAs with GU(N) anticodons (tRNA-Asp, -Asn, -His and -Tyr). Catalysis occurs through a double-displacement mechanism. The nucleophile active site attacks the C1' of nucleotide 34 to detach the guanine base from the RNA, forming a covalent enzyme-RNA intermediate. The proton acceptor active site deprotonates the incoming PreQ1, allowing a nucleophilic attack on the C1' of the ribose to form the product. After dissociation, two additional enzymatic reactions on the tRNA convert PreQ1 to queuine (Q), resulting in the hypermodified nucleoside queuosine (7-(((4,5-cis-dihydroxy-2-cyclopenten-1-yl)amino)methyl)-7-deazaguanosine). The sequence is that of Queuine tRNA-ribosyltransferase from Pediococcus pentosaceus (strain ATCC 25745 / CCUG 21536 / LMG 10740 / 183-1w).